We begin with the raw amino-acid sequence, 431 residues long: 5-methylthioadenosine/S-adenosylhomocysteine deaminase (431 aa).

Positions 61 and 63 each coordinate Zn(2+). Substrate contacts are provided by E90 and H183. H210 contributes to the Zn(2+) binding site. Positions 213 and 298 each coordinate substrate. D298 contacts Zn(2+).

Belongs to the metallo-dependent hydrolases superfamily. MTA/SAH deaminase family. Requires Zn(2+) as cofactor.

The catalysed reaction is S-adenosyl-L-homocysteine + H2O + H(+) = S-inosyl-L-homocysteine + NH4(+). It carries out the reaction S-methyl-5'-thioadenosine + H2O + H(+) = S-methyl-5'-thioinosine + NH4(+). Catalyzes the deamination of 5-methylthioadenosine and S-adenosyl-L-homocysteine into 5-methylthioinosine and S-inosyl-L-homocysteine, respectively. Is also able to deaminate adenosine. This chain is 5-methylthioadenosine/S-adenosylhomocysteine deaminase, found in Halobacterium salinarum (strain ATCC 700922 / JCM 11081 / NRC-1) (Halobacterium halobium).